Consider the following 30-residue polypeptide: Cytochrome c3, 50 kDa (30 aa).

In terms of assembly, monomer. Binds 4 heme groups per subunit.

Its subcellular location is the periplasm. In terms of biological role, participates in sulfate respiration coupled with phosphorylation by transferring electrons from the enzyme dehydrogenase to ferredoxin. The polypeptide is Cytochrome c3, 50 kDa (Desulfuromonas acetoxidans (Chloropseudomonas ethylica)).